The chain runs to 190 residues: Elongation factor P-like protein (190 aa).

The protein belongs to the elongation factor P family.

The polypeptide is Elongation factor P-like protein (Escherichia fergusonii (strain ATCC 35469 / DSM 13698 / CCUG 18766 / IAM 14443 / JCM 21226 / LMG 7866 / NBRC 102419 / NCTC 12128 / CDC 0568-73)).